We begin with the raw amino-acid sequence, 40 residues long: Muscarinic m1-toxin3 (40 aa).

Cys-3 and Cys-24 are oxidised to a cystine.

The protein belongs to the three-finger toxin family. Short-chain subfamily. Aminergic toxin sub-subfamily. In terms of assembly, monomer. Post-translationally, contains 4 disulfide bonds. As to expression, expressed by the venom gland.

The protein localises to the secreted. Binds irreversibly and specifically to M1 (CHRM1) muscarinic acetylcholine receptors, blocking further binding of antagonists and preventing the action of agonists. The protein is Muscarinic m1-toxin3 of Dendroaspis angusticeps (Eastern green mamba).